We begin with the raw amino-acid sequence, 491 residues long: Maintenance of mitochondrial morphology protein 1 (491 aa).

At 1–22 (MTFQQNEPSAVPAQSSLSFTQG) the chain is on the lumenal side. Residues 23-43 (FLLGQLSVVLLIGAFIKFFIF) traverse the membrane as a helical segment. At 44 to 491 (GEAPPPPSRG…GTLPGGAAAN (448 aa)) the chain is on the cytoplasmic side. Disordered stretches follow at residues 50–95 (PSRG…PVPS), 275–325 (PPLH…SPKS), and 392–491 (RTGV…AAAN). Over residues 54–64 (LSHRASTHRRS) the composition is skewed to basic residues. Polar residues-rich tracts occupy residues 65–78 (NSIY…GTSR) and 85–95 (STSNVLRPVPS). Positions 131–384 (QPESLDWFNV…EPRVQVVGLP (254 aa)) constitute an SMP-LTD domain. Residues 275–287 (PPLHTPSPSPSPP) show a composition bias toward pro residues. 2 stretches are compositionally biased toward polar residues: residues 300-315 (TNGS…NAQE) and 403-412 (TGSNAASRSA). The segment covering 422–434 (RADDIGREPDGLR) has biased composition (basic and acidic residues).

Belongs to the MMM1 family. As to quaternary structure, homodimer. Component of the ER-mitochondria encounter structure (ERMES) or MDM complex, composed of mmm1, mdm10, mdm12 and mdm34. A mmm1 homodimer associates with one molecule of mdm12 on each side in a pairwise head-to-tail manner, and the SMP-LTD domains of mmm1 and mdm12 generate a continuous hydrophobic tunnel for phospholipid trafficking.

The protein resides in the endoplasmic reticulum membrane. Its function is as follows. Component of the ERMES/MDM complex, which serves as a molecular tether to connect the endoplasmic reticulum (ER) and mitochondria. Components of this complex are involved in the control of mitochondrial shape and protein biogenesis, and function in nonvesicular lipid trafficking between the ER and mitochondria. The mdm12-mmm1 subcomplex functions in the major beta-barrel assembly pathway that is responsible for biogenesis of all outer membrane beta-barrel proteins, and acts in a late step after the SAM complex. The mdm10-mdm12-mmm1 subcomplex further acts in the TOM40-specific pathway after the action of the mdm12-mmm1 complex. Essential for establishing and maintaining the structure of mitochondria and maintenance of mtDNA nucleoids. This Aspergillus flavus (strain ATCC 200026 / FGSC A1120 / IAM 13836 / NRRL 3357 / JCM 12722 / SRRC 167) protein is Maintenance of mitochondrial morphology protein 1.